A 236-amino-acid chain; its full sequence is UPF0257 lipoprotein YnfC (236 aa).

Positions 1–16 (MKYKLLPCLLAILLTG) are cleaved as a signal peptide. Cysteine 17 is lipidated: N-palmitoyl cysteine. A lipid anchor (S-diacylglycerol cysteine) is attached at cysteine 17.

Belongs to the UPF0257 family.

It is found in the cell membrane. The protein is UPF0257 lipoprotein YnfC of Escherichia coli O157:H7.